Reading from the N-terminus, the 140-residue chain is Holo-[acyl-carrier-protein] synthase (140 aa).

The Mg(2+) site is built by D7 and E58.

Belongs to the P-Pant transferase superfamily. AcpS family. It depends on Mg(2+) as a cofactor.

It is found in the cytoplasm. The catalysed reaction is apo-[ACP] + CoA = holo-[ACP] + adenosine 3',5'-bisphosphate + H(+). Transfers the 4'-phosphopantetheine moiety from coenzyme A to a Ser of acyl-carrier-protein. In Chloroflexus aggregans (strain MD-66 / DSM 9485), this protein is Holo-[acyl-carrier-protein] synthase.